Here is a 454-residue protein sequence, read N- to C-terminus: Allantoinase (454 aa).

6 residues coordinate Zn(2+): H59, H61, K150, H190, H246, and D319. Position 150 is an N6-carboxylysine (K150).

This sequence belongs to the metallo-dependent hydrolases superfamily. Allantoinase family. Homotetramer. It depends on Zn(2+) as a cofactor. Post-translationally, carboxylation allows a single lysine to coordinate two zinc ions.

It catalyses the reaction (S)-allantoin + H2O = allantoate + H(+). Its pathway is nitrogen metabolism; (S)-allantoin degradation; allantoate from (S)-allantoin: step 1/1. Catalyzes the conversion of allantoin (5-ureidohydantoin) to allantoic acid by hydrolytic cleavage of the five-member hydantoin ring. The polypeptide is Allantoinase (Bacillus licheniformis (strain ATCC 14580 / DSM 13 / JCM 2505 / CCUG 7422 / NBRC 12200 / NCIMB 9375 / NCTC 10341 / NRRL NRS-1264 / Gibson 46)).